The chain runs to 598 residues: Chaperone protein DnaK (598 aa).

Thr-175 bears the Phosphothreonine; by autocatalysis mark. Over residues 571-591 the composition is skewed to low complexity; sequence AKSAAASSNKDDSLNNNSSSN. Residues 571–598 are disordered; it reads AKSAAASSNKDDSLNNNSSSNNDEETFE.

It belongs to the heat shock protein 70 family.

Its function is as follows. Acts as a chaperone. The sequence is that of Chaperone protein DnaK from Mycoplasmopsis agalactiae (strain NCTC 10123 / CIP 59.7 / PG2) (Mycoplasma agalactiae).